The chain runs to 1243 residues: Protein MMS22-like (1243 aa).

The protein belongs to the MMS22 family. MMS22L subfamily. In terms of assembly, component of the MMS22L-TONSL complex, a complex at least composed of MMS22L and TONSL/NFKBIL2. Interacts with RAD51; interaction is direct. In terms of processing, degraded by the ubiquitin-proteasome system upon replication stress.

The protein resides in the nucleus. The protein localises to the chromosome. Its function is as follows. Component of the MMS22L-TONSL complex, a complex that promotes homologous recombination-mediated repair of double-strand breaks (DSBs) at stalled or collapsed replication forks. The MMS22L-TONSL complex is required to maintain genome integrity during DNA replication. It mediates the assembly of RAD51 filaments on single-stranded DNA (ssDNA): the MMS22L-TONSL complex is recruited to DSBs following histone replacement by histone chaperones and eviction of the replication protein A complex (RPA/RP-A) from DSBs. Following recruitment to DSBs, the TONSL-MMS22L complex promotes recruitment of RAD51 filaments and subsequent homologous recombination. Within the complex, MMS22L acts by binding ssDNA. In Homo sapiens (Human), this protein is Protein MMS22-like.